Consider the following 215-residue polypeptide: Large ribosomal subunit protein eL15 (215 aa).

The interval 179-215 (GTVKHKWKKKEKEREQKKRHEATKYYRLQNYDKLPGK) is disordered. Residues 188–202 (KEKEREQKKRHEATK) show a composition bias toward basic and acidic residues.

This sequence belongs to the eukaryotic ribosomal protein eL15 family.

The sequence is that of Large ribosomal subunit protein eL15 from Sulfurisphaera tokodaii (strain DSM 16993 / JCM 10545 / NBRC 100140 / 7) (Sulfolobus tokodaii).